The following is a 398-amino-acid chain: ATP-dependent RNA helicase eIF4A (398 aa).

A Q motif motif is present at residues D25 to Q53. One can recognise a Helicase ATP-binding domain in the interval I56–I226. A69–T76 lines the ATP pocket. Residues D174–D177 carry the DEAD box motif. A Helicase C-terminal domain is found at G237 to I398.

The protein belongs to the DEAD box helicase family. eIF4A subfamily. As to quaternary structure, component of the eIF4F complex, which composition varies with external and internal environmental conditions. It is composed of at least eIF4A, eIF4E and eIF4G.

Its subcellular location is the cytoplasm. The catalysed reaction is ATP + H2O = ADP + phosphate + H(+). Its function is as follows. ATP-dependent RNA helicase which is a subunit of the eIF4F complex involved in cap recognition and is required for mRNA binding to ribosome. In the current model of translation initiation, eIF4A unwinds RNA secondary structures in the 5'-UTR of mRNAs which is necessary to allow efficient binding of the small ribosomal subunit, and subsequent scanning for the initiator codon. The sequence is that of ATP-dependent RNA helicase eIF4A (tif1) from Emericella nidulans (strain FGSC A4 / ATCC 38163 / CBS 112.46 / NRRL 194 / M139) (Aspergillus nidulans).